The following is a 203-amino-acid chain: Inosine triphosphate pyrophosphatase (203 aa).

10–15 (TGNQNK) contacts ITP. Residue Glu-40 participates in Mg(2+) binding. Residues Lys-52, 68–69 (DT), Lys-85, 145–148 (FGWD), Lys-168, and 173–174 (HR) each bind ITP.

The protein belongs to the HAM1 NTPase family. In terms of assembly, homodimer. Mg(2+) serves as cofactor. The cofactor is Mn(2+).

The protein localises to the cytoplasm. The enzyme catalyses ITP + H2O = IMP + diphosphate + H(+). It carries out the reaction dITP + H2O = dIMP + diphosphate + H(+). It catalyses the reaction XTP + H2O = XMP + diphosphate + H(+). In terms of biological role, pyrophosphatase that hydrolyzes non-canonical purine nucleotides such as inosine triphosphate (ITP), deoxyinosine triphosphate (dITP) or xanthosine 5'-triphosphate (XTP) to their respective monophosphate derivatives. The enzyme does not distinguish between the deoxy- and ribose forms. Probably excludes non-canonical purines from RNA and DNA precursor pools, thus preventing their incorporation into RNA and DNA and avoiding chromosomal lesions. The sequence is that of Inosine triphosphate pyrophosphatase from Nematostella vectensis (Starlet sea anemone).